A 339-amino-acid chain; its full sequence is MIKEYIRKITEGKDLSADEMKDLFNILMEGQATDAQIGAVLIGLKMKGESVEEISSAAQIMREKAVKVPVKDRSRLIDTCGTGGDKVDTFNVSTITAFVIAGAGVKVAKHGNRSVSSKCGSADIMEALGVKIDLSPEQAAEAIDRIGLGFLFAPVYHPAMKNVIRQRREIGVRTIFNILGPLSNPAGAKYQLLGVYDKDLVEPVARVLSLLGIERAYVVHGMEGLDEVSITTDTMVAEVDGGDISVYSVKPEDFGIERASLDDIRGGDLDFNLQIALDILEGKDRSRKTDFVSLNAGFAFHAVGVVDSVKEGIELAKETIYSKKAYEILEKLREYSKGG.

Residues G81, 84–85, T89, 91–94, 109–117, and S121 contribute to the 5-phospho-alpha-D-ribose 1-diphosphate site; these read GD, NVST, and KHGNRSVSS. G81 is a binding site for anthranilate. Residue S93 coordinates Mg(2+). N112 is an anthranilate binding site. R167 contacts anthranilate. Mg(2+) contacts are provided by D226 and E227.

This sequence belongs to the anthranilate phosphoribosyltransferase family. In terms of assembly, homodimer. It depends on Mg(2+) as a cofactor.

The enzyme catalyses N-(5-phospho-beta-D-ribosyl)anthranilate + diphosphate = 5-phospho-alpha-D-ribose 1-diphosphate + anthranilate. It participates in amino-acid biosynthesis; L-tryptophan biosynthesis; L-tryptophan from chorismate: step 2/5. In terms of biological role, catalyzes the transfer of the phosphoribosyl group of 5-phosphorylribose-1-pyrophosphate (PRPP) to anthranilate to yield N-(5'-phosphoribosyl)-anthranilate (PRA). The polypeptide is Anthranilate phosphoribosyltransferase (Persephonella marina (strain DSM 14350 / EX-H1)).